The chain runs to 300 residues: Glucose and ribitol dehydrogenase homolog (300 aa).

The span at 1-14 (MASQQFPPQNQETQ) shows a compositional bias: polar residues. Residues 1-23 (MASQQFPPQNQETQPGKEHAMDP) form a disordered region. NAD(+) is bound at residue 44–68 (IVTGGDSGIGRAVCLCFALEGATVA). Position 192 (Ser192) interacts with substrate. Tyr205 functions as the Proton acceptor in the catalytic mechanism.

The protein belongs to the short-chain dehydrogenases/reductases (SDR) family.

In terms of biological role, may act as a short alcohol-polyol-sugar dehydrogenase possibly related to carbohydrate metabolism and the acquisition of desiccation tolerance. May also be involved in signal transduction. This is Glucose and ribitol dehydrogenase homolog from Oryza sativa subsp. japonica (Rice).